Reading from the N-terminus, the 147-residue chain is Lysozyme C (147 aa).

The N-terminal stretch at 1-18 is a signal peptide; the sequence is MRSLLVLVLCFLPLAALG. Residues 19-147 form the C-type lysozyme domain; the sequence is KVYGRCELAA…VNAWIRGCRL (129 aa). 4 disulfide bridges follow: Cys24–Cys145, Cys48–Cys133, Cys82–Cys98, and Cys94–Cys112. Active-site residues include Glu53 and Asp70.

This sequence belongs to the glycosyl hydrolase 22 family. In terms of assembly, monomer.

It is found in the secreted. The catalysed reaction is Hydrolysis of (1-&gt;4)-beta-linkages between N-acetylmuramic acid and N-acetyl-D-glucosamine residues in a peptidoglycan and between N-acetyl-D-glucosamine residues in chitodextrins.. In terms of biological role, lysozymes have primarily a bacteriolytic function; those in tissues and body fluids are associated with the monocyte-macrophage system and enhance the activity of immunoagents. The chain is Lysozyme C (LYZ) from Coturnix japonica (Japanese quail).